The chain runs to 292 residues: Bifunctional protein FolD (292 aa).

NADP(+) is bound by residues Gly169–Ser171 and Ser194.

The protein belongs to the tetrahydrofolate dehydrogenase/cyclohydrolase family. In terms of assembly, homodimer.

The catalysed reaction is (6R)-5,10-methylene-5,6,7,8-tetrahydrofolate + NADP(+) = (6R)-5,10-methenyltetrahydrofolate + NADPH. It catalyses the reaction (6R)-5,10-methenyltetrahydrofolate + H2O = (6R)-10-formyltetrahydrofolate + H(+). It participates in one-carbon metabolism; tetrahydrofolate interconversion. Catalyzes the oxidation of 5,10-methylenetetrahydrofolate to 5,10-methenyltetrahydrofolate and then the hydrolysis of 5,10-methenyltetrahydrofolate to 10-formyltetrahydrofolate. The chain is Bifunctional protein FolD from Nostoc punctiforme (strain ATCC 29133 / PCC 73102).